Reading from the N-terminus, the 212-residue chain is ATP-dependent Clp protease proteolytic subunit (212 aa).

Serine 109 serves as the catalytic Nucleophile. The active site involves histidine 134.

This sequence belongs to the peptidase S14 family. In terms of assembly, fourteen ClpP subunits assemble into 2 heptameric rings which stack back to back to give a disk-like structure with a central cavity, resembling the structure of eukaryotic proteasomes.

It is found in the cytoplasm. It catalyses the reaction Hydrolysis of proteins to small peptides in the presence of ATP and magnesium. alpha-casein is the usual test substrate. In the absence of ATP, only oligopeptides shorter than five residues are hydrolyzed (such as succinyl-Leu-Tyr-|-NHMec, and Leu-Tyr-Leu-|-Tyr-Trp, in which cleavage of the -Tyr-|-Leu- and -Tyr-|-Trp bonds also occurs).. Cleaves peptides in various proteins in a process that requires ATP hydrolysis. Has a chymotrypsin-like activity. Plays a major role in the degradation of misfolded proteins. In Bdellovibrio bacteriovorus (strain ATCC 15356 / DSM 50701 / NCIMB 9529 / HD100), this protein is ATP-dependent Clp protease proteolytic subunit.